Here is an 808-residue protein sequence, read N- to C-terminus: Sucrose synthase 4 (808 aa).

Positions 277-754 are GT-B glycosyltransferase; that stretch reads MVFNVVILSP…GLERIQEKYT (478 aa).

It belongs to the glycosyltransferase 1 family. Plant sucrose synthase subfamily. Detected in the whole plant with highest expression in young rosette leaves and roots.

It catalyses the reaction an NDP-alpha-D-glucose + D-fructose = a ribonucleoside 5'-diphosphate + sucrose + H(+). In terms of biological role, sucrose-cleaving enzyme that provides UDP-glucose and fructose for various metabolic pathways. This is Sucrose synthase 4 (SUS4) from Arabidopsis thaliana (Mouse-ear cress).